Consider the following 501-residue polypeptide: 7-alpha-hydroxycholest-4-en-3-one 12-alpha-hydroxylase (501 aa).

The chain crosses the membrane as a helical span at residues 1–21; sequence MVLWGPVLGALLVVIAGYLCL. Residue Ser326 is modified to Phosphoserine. Cys440 contacts heme.

It belongs to the cytochrome P450 family. Requires heme as cofactor. Liver.

The protein resides in the endoplasmic reticulum membrane. It localises to the microsome membrane. It catalyses the reaction 7alpha-hydroxycholest-4-en-3-one + reduced [NADPH--hemoprotein reductase] + O2 = 7alpha,12alpha-dihydroxycholest-4-en-3-one + oxidized [NADPH--hemoprotein reductase] + H2O + H(+). It carries out the reaction 5beta-cholestane-3alpha,7alpha-diol + reduced [NADPH--hemoprotein reductase] + O2 = 5beta-cholestane-3alpha,7alpha,12alpha-triol + oxidized [NADPH--hemoprotein reductase] + H2O + H(+). The enzyme catalyses chenodeoxycholate + reduced [NADPH--hemoprotein reductase] + O2 = cholate + oxidized [NADPH--hemoprotein reductase] + H2O + H(+). The protein operates within lipid metabolism; bile acid biosynthesis. A cytochrome P450 monooxygenase involved in primary bile acid biosynthesis. Catalyzes the 12alpha-hydroxylation of 7alpha-hydroxy-4-cholesten-3-one, an intermediate metabolite in cholic acid biosynthesis. Controls biliary balance of cholic acid and chenodeoxycholic acid, ultimately regulating the intestinal absorption of dietary lipids. Mechanistically, uses molecular oxygen inserting one oxygen atom into a substrate, and reducing the second into a water molecule, with two electrons provided by NADPH via cytochrome P450 reductase (CPR; NADPH--hemoprotein reductase). The polypeptide is 7-alpha-hydroxycholest-4-en-3-one 12-alpha-hydroxylase (Homo sapiens (Human)).